The chain runs to 570 residues: La-related protein 7 (570 aa).

Met1 carries the post-translational modification N-acetylmethionine. Positions 1–16 are enriched in basic and acidic residues; sequence METENQKTMEESTKRK. Disordered regions lie at residues 1-24 and 180-364; these read METENQKTMEESTKRKEEKKKRSR and LNNP…ERHK. The region spanning 22-116 is the HTH La-type RNA-binding domain; it reads RSRVKQVLAD…KPLGERPKDE (95 aa). The RRM domain occupies 119-197; it reads RTVYVELLPK…PRKPGIFPKT (79 aa). Residues 213 to 222 show a composition bias toward basic residues; sequence KKKKKKKGRI. A Glycyl lysine isopeptide (Lys-Gly) (interchain with G-Cter in SUMO2) cross-link involves residue Lys231. A Phosphothreonine modification is found at Thr251. Ser253 and Ser256 each carry phosphoserine. Phosphothreonine is present on Thr260. The span at 286–295 shows a compositional bias: basic and acidic residues; sequence RAGKRERCSA. Phosphoserine occurs at positions 294 and 334. Thr335 is modified (phosphothreonine). Over residues 340-349 the composition is skewed to basic and acidic residues; sequence ETDRKGDSLS. Ser347 is modified (phosphoserine). A compositionally biased stretch (basic residues) spans 350 to 363; the sequence is KVKRKHKKKHKERH. Lys406 participates in a covalent cross-link: Glycyl lysine isopeptide (Lys-Gly) (interchain with G-Cter in SUMO2). Positions 438–551 constitute a xRRM domain; it reads QFVTGVIVKI…TEKLITKAEK (114 aa).

It belongs to the LARP7 family. As to quaternary structure, core component of the 7SK RNP complex, at least composed of 7SK RNA, LARP7, MEPCE, HEXIM1 (or HEXIM2) and P-TEFb (composed of CDK9 and CCNT1/cyclin-T1). Interacts with METTL16. Interacts with RBM7; upon genotoxic stress this interaction is enhanced, triggering the release of inactive P-TEFb complex from the core, yielding to P-TEFb complex activation. Associates with box C/D small nucleolar ribonucleoprotein (snoRNP) complexes.

It localises to the nucleus. The protein localises to the nucleoplasm. In terms of biological role, RNA-binding protein that specifically binds distinct small nuclear RNA (snRNAs) and regulates their processing and function. Specifically binds the 7SK snRNA (7SK RNA) and acts as a core component of the 7SK ribonucleoprotein (RNP) complex, thereby acting as a negative regulator of transcription elongation by RNA polymerase II. The 7SK RNP complex sequesters the positive transcription elongation factor b (P-TEFb) in a large inactive 7SK RNP complex preventing RNA polymerase II phosphorylation and subsequent transcriptional elongation. The 7SK RNP complex also promotes snRNA gene transcription by RNA polymerase II via interaction with the little elongation complex (LEC). LARP7 specifically binds to the highly conserved 3'-terminal U-rich stretch of 7SK RNA; on stimulation, remains associated with 7SK RNA, whereas P-TEFb is released from the complex. LARP7 also acts as a regulator of mRNA splicing fidelity by promoting U6 snRNA processing. Specifically binds U6 snRNAs and associates with a subset of box C/D RNP complexes: promotes U6 snRNA 2'-O-methylation by facilitating U6 snRNA loading into box C/D RNP complexes. U6 snRNA 2'-O-methylation is required for mRNA splicing fidelity. Binds U6 snRNAs with a 5'-CAGGG-3' sequence motif. U6 snRNA processing is required for spermatogenesis. This Mus musculus (Mouse) protein is La-related protein 7.